We begin with the raw amino-acid sequence, 586 residues long: Nucleus accumbens-associated protein 2 (586 aa).

Residues 30–94 form the BTB domain; the sequence is CDVSIVVKGQ…CYTGKLTMAA (65 aa). Residue Lys-171 forms a Glycyl lysine isopeptide (Lys-Gly) (interchain with G-Cter in SUMO2) linkage. The interval 177-196 is disordered; that stretch reads MPPASGPGLASKRPLETGPR. Lys-215 is covalently cross-linked (Glycyl lysine isopeptide (Lys-Gly) (interchain with G-Cter in SUMO2)). The segment at 236 to 272 is disordered; the sequence is QVPYPPGERTSPGASSLPTTDSPTSYHNEEDEEDDEA. Polar residues predominate over residues 247–261; sequence PGASSLPTTDSPTSY. Glycyl lysine isopeptide (Lys-Gly) (interchain with G-Cter in SUMO2) cross-links involve residues Lys-297, Lys-427, and Lys-454. Positions 349 to 446 constitute a BEN domain; sequence GSGVYITRGQ…DMCTNARRVR (98 aa). Residues 542 to 586 form a disordered region; it reads APEQLPADGQSSPQAFEQGNTSSSRPQTPVATATRRPEGTYAGTL. Positions 550 to 572 are enriched in polar residues; that stretch reads GQSSPQAFEQGNTSSSRPQTPVA.

Homooligomer; mediated by the BTB domain. Interacts with the NuRD complex. Interacts (via C-terminal part) with HDAC2. Interacts (via BTB domain) with MTA1, MTA2 and MTA3.

It is found in the nucleus. Its function is as follows. Functions as a transcriptional repressor through its association with the NuRD complex. Recruits the NuRD complex to the promoter of MDM2, leading to the repression of MDM2 transcription and subsequent stability of p53/TP53. The polypeptide is Nucleus accumbens-associated protein 2 (Nacc2) (Mus musculus (Mouse)).